The chain runs to 276 residues: Secretagogin (276 aa).

6 consecutive EF-hand domains span residues 12–47 (LDAAGFWQVWQRFDVEEKGYIEEKELDAFFYHMLTK), 71–93 (DVSKDGCIQMKELAGMFLSEDEN), 105–140 (DSSVEFMRIWRKYDADSSGFISAAELCNFLRDLFLH), 149–184 (KLEEYTGTMMKIFDKNKDGRLDLNDLARILALQENF), 197–232 (ERKRDFEKIFAHYDVSKTGALEGPEVDGFVKDMMEL), and 240–276 (VDLDKFREILLRHCDVNKDGKIQKSELALCLGLKINP). Positions 71, 73, 75, 77, 82, 118, 120, 122, 129, 162, 164, 166, 168, 173, 210, 212, 214, 221, 254, 256, 258, 260, and 265 each coordinate Ca(2+).

It is found in the cytoplasm. Its subcellular location is the secreted. The protein resides in the cytoplasmic vesicle. The protein localises to the secretory vesicle membrane. The sequence is that of Secretagogin (SCGN) from Bos taurus (Bovine).